Here is a 478-residue protein sequence, read N- to C-terminus: Probable serine carboxypeptidase CPVL (478 aa).

The signal sequence occupies residues 1–22; that stretch reads MVRAQWKVIILLILLMVIPSDG. N-linked (GlcNAc...) asparagine glycosylation is found at N83 and N134. S206 is a catalytic residue. N309 and N350 each carry an N-linked (GlcNAc...) asparagine glycan. Residues D390 and H450 contribute to the active site.

Belongs to the peptidase S10 family.

Functionally, may be involved in the digestion of phagocytosed particles in the lysosome, participation in an inflammatory protease cascade, and trimming of peptides for antigen presentation. This chain is Probable serine carboxypeptidase CPVL (CPVL), found in Rattus norvegicus (Rat).